A 366-amino-acid chain; its full sequence is uncharacterized protein (366 aa).

In terms of domain architecture, PINc spans 169-280 (ILDTSVIIDG…LNKVCELQKV (112 aa)). Asp250 is a Mg(2+) binding site. Positions 295–356 (VVLPGEEMNV…LQTAAGRMIF (62 aa)) constitute a TRAM domain.

Belongs to the ycf81 family. It in the central section; belongs to the PINc/VapC protein family. Mg(2+) serves as cofactor.

Functionally, an RNase. This is an uncharacterized protein from Bacillus subtilis (strain 168).